The following is a 98-amino-acid chain: Omega-hexatoxin-Hr2b (98 aa).

An N-terminal signal peptide occupies residues 1 to 22; the sequence is MKFSKLSLTLALILTQVLFVLC. Residues 24–56 constitute a propeptide that is removed on maturation; sequence KINEDFMKHGLESQALHDEIRKPIDSENPDTER. 3 cysteine pairs are disulfide-bonded: Cys-60–Cys-74, Cys-67–Cys-80, and Cys-73–Cys-85. Leu-97 is modified (leucine amide).

It belongs to the neurotoxin 15 family. 02 (omega-actx) subfamily. As to expression, expressed by the venom gland.

It localises to the secreted. Potent inhibitor of insect, but not mammalian, voltage-gated calcium channels (Cav). The sequence is that of Omega-hexatoxin-Hr2b from Atrax robustus (Sydney funnel-web spider).